The primary structure comprises 595 residues: Probable translation initiation factor IF-2 (595 aa).

One can recognise a tr-type G domain in the interval 11–225 (LRTPIVAVLG…ILVGLAQRYL (215 aa)). The interval 20 to 27 (GHVDHGKT) is G1. Position 20–27 (20–27 (GHVDHGKT)) interacts with GTP. The tract at residues 45–49 (GITQH) is G2. The G3 stretch occupies residues 81 to 84 (DTPG). GTP contacts are provided by residues 81–85 (DTPGH) and 135–138 (NKID). The G4 stretch occupies residues 135–138 (NKID). The tract at residues 203-205 (SAL) is G5.

The protein belongs to the TRAFAC class translation factor GTPase superfamily. Classic translation factor GTPase family. IF-2 subfamily.

In terms of biological role, function in general translation initiation by promoting the binding of the formylmethionine-tRNA to ribosomes. Seems to function along with eIF-2. The sequence is that of Probable translation initiation factor IF-2 (infB) from Archaeoglobus fulgidus (strain ATCC 49558 / DSM 4304 / JCM 9628 / NBRC 100126 / VC-16).